The chain runs to 205 residues: MSVFALGMILFAYLCGSLSSAILVCRLFKLPDPRHHGSGNPGATNVLRIGGRGVAATVLVFDVLKGMLPVWLAYHLGATPFYLGLTAIAACLGHIYPVFFHFKGGKGVATALGAIAPIGWDLTGLMTGTWLLTVLLSGYSSLGAIVSALIAPFYVWWFKPQFTFPVAMLSCLILLRHHDNIQRLWRGQETRVWKKKDRRKGPGKT.

The next 5 helical transmembrane spans lie at 3 to 23, 53 to 73, 80 to 100, 112 to 132, and 138 to 158; these read VFAL…SAIL, GVAA…VWLA, PFYL…PVFF, LGAI…TWLL, and GYSS…VWWF.

It belongs to the PlsY family. In terms of assembly, probably interacts with PlsX.

It is found in the cell inner membrane. It catalyses the reaction an acyl phosphate + sn-glycerol 3-phosphate = a 1-acyl-sn-glycero-3-phosphate + phosphate. Its pathway is lipid metabolism; phospholipid metabolism. In terms of biological role, catalyzes the transfer of an acyl group from acyl-phosphate (acyl-PO(4)) to glycerol-3-phosphate (G3P) to form lysophosphatidic acid (LPA). This enzyme utilizes acyl-phosphate as fatty acyl donor, but not acyl-CoA or acyl-ACP. The protein is Glycerol-3-phosphate acyltransferase of Erwinia tasmaniensis (strain DSM 17950 / CFBP 7177 / CIP 109463 / NCPPB 4357 / Et1/99).